Consider the following 551-residue polypeptide: MTIEFSHTTGLLLLAMPALLLMAAVIKPKQGAAYARAYRQRVQWTSFAAFGLALLAVVSFLFARQQNLMLGAGSLPAGLGLLALSIQVNGLTLVLASLVSFVLSVIARYSVQYLDGDPQQARFFRLLAVTGGFFLLVVISGNLGLFTLAIIATGFGLHRLLSFYADRPRAIMATHKKSIFSRTADALLLAATVLIGHQIGSLEFSQISAYVHAQDHLSIALHVAAWLIVLAAILKSAQFPFHGWLIQVMEAPTPVSALMHAGVVYSGAIIVLRTSELLAADGTALLLLALIGLMTLAIGSLVMLTQSAIKSSLAWSTAAQLGFMMLELGLGLFGLALLHLVGHSLYKAHAFLSSGSMTDHLRQAKVLKNRPISVVAWFTTVIVSGLFTLGIAAAMGLSIDQEPMLPAVLTIIALATAQLMLKALSHGTWREILVAAGAAIAMTGVYVFLHEVFITGFADTLAATPQRAPLLDLLLMAITIITFLFVAWLQGPGKTLMSPERQFALFVHLNNGLYLDRWVERLAFRFWPEKVGRAPKKSCAVIPPNPSGIEP.

The next 14 membrane-spanning stretches (helical) occupy residues 6–26, 42–62, 65–85, 86–106, 132–152, 187–207, 217–237, 252–272, 284–304, 321–341, 374–394, 404–424, 434–454, and 469–489; these read SHTT…AAVI, VQWT…SFLF, QQNL…LALS, IQVN…LSVI, GFFL…AIIA, LLLA…FSQI, LSIA…LKSA, PTPV…IIVL, ALLL…LVML, LGFM…LHLV, VVAW…IAAA, MLPA…LKAL, VAAG…EVFI, and PLLD…VAWL.

The protein belongs to the inorganic carbon transporter (TC 9.A.2) DabB family. Forms a complex with DabA2, possibly a heterodimer.

It localises to the cell inner membrane. Its activity is regulated as follows. Uptake of inorganic carbon by cells in the presence of thiosulphate is fully inhibited by the uncouplers carbonyl cyanide m-chlorophenyl hydrazone (CCCP), carbonyl cyanide p-trifluoromethoxyphenyl hydrazone (FCCP), S13 or SF6847. Not inhibited by the ATPase inhibitor N,N-dicyclohexylcarbodiimide (DCCD). Inorganic carbon uptake is inhibited by the ionophore carbonyl cyanide m-chlorophenyl hydrazone (CCCP), suggesting uptake is coupled to a cation gradient. Functionally, part of an energy-coupled inorganic carbon pump; its substrate may be carbon dioxide. Expression of both dabA2 and dabB2 (DAB2) restores growth in ambient air to E.coli deleted of its carbonic anhydrase genes (called CAfree, deletion of 'can' and 'cynT'); neither dabA2 or dabB2 alone is sufficient. Rescue is pH-independent, suggesting it transports CO(2) and not carbonate ions. Together the genes allow greater than normal uptake of inorganic carbon by E.coli. Uptake of carbon dioxide rather than bicarbonate has been suggested based on kinetic calculations. This Halothiobacillus neapolitanus (strain ATCC 23641 / c2) (Thiobacillus neapolitanus) protein is Probable inorganic carbon transporter subunit DabB2.